The sequence spans 490 residues: MSTAKWETVIGLEVHVELSTETKIWCGCKNEFGAEPNTNVCPVCLALPGALPVLNYKAVEYTIRAGLALNCKIQRHSKFDRKNYFYADLPSGYQISQFDLPLCYDGYVDITKKDGTTRRIRIKRIHLETDAGKLLHAGDDVAAADYSLVDFNRAGVPLIEIVTEPDLRSAEEAGLFLQKLRTILKYSGVSDVKMEEGSMRCDVNLSVRPAGSSEYGVRTELKNVNSFSAVMRGIEYEEKRHIRILEEGGQPEQETRSWRDAQGISVLLRSKEDAEDYRYFPEPDLPPLEVSAEEIERIRAGLPELPDALMQRLMTEYGLSAYDASVIVAEREYAQWFLHAVELAGAGQAKTVANWQINELYRVMNEKGLGPEQIPVTPEQLVGMLKLIEQGTITGKIAKTVFDKMVETGKDAETIVKEEGLTQVADEGELLAIAREVVASNPKVFEDWKAGKQSAAQWFVGQIMKRTRGRANPQMALKLVTQALEEQAQK.

Belongs to the GatB/GatE family. GatB subfamily. Heterotrimer of A, B and C subunits.

The enzyme catalyses L-glutamyl-tRNA(Gln) + L-glutamine + ATP + H2O = L-glutaminyl-tRNA(Gln) + L-glutamate + ADP + phosphate + H(+). It carries out the reaction L-aspartyl-tRNA(Asn) + L-glutamine + ATP + H2O = L-asparaginyl-tRNA(Asn) + L-glutamate + ADP + phosphate + 2 H(+). In terms of biological role, allows the formation of correctly charged Asn-tRNA(Asn) or Gln-tRNA(Gln) through the transamidation of misacylated Asp-tRNA(Asn) or Glu-tRNA(Gln) in organisms which lack either or both of asparaginyl-tRNA or glutaminyl-tRNA synthetases. The reaction takes place in the presence of glutamine and ATP through an activated phospho-Asp-tRNA(Asn) or phospho-Glu-tRNA(Gln). The sequence is that of Aspartyl/glutamyl-tRNA(Asn/Gln) amidotransferase subunit B from Symbiobacterium thermophilum (strain DSM 24528 / JCM 14929 / IAM 14863 / T).